The chain runs to 221 residues: Octanoyltransferase (221 aa).

A BPL/LPL catalytic domain is found at proline 40–leucine 218. Substrate-binding positions include arginine 82–histidine 89, alanine 149–glycine 151, and glycine 162–alanine 164. The Acyl-thioester intermediate role is filled by cysteine 180.

This sequence belongs to the LipB family.

It is found in the cytoplasm. It carries out the reaction octanoyl-[ACP] + L-lysyl-[protein] = N(6)-octanoyl-L-lysyl-[protein] + holo-[ACP] + H(+). It participates in protein modification; protein lipoylation via endogenous pathway; protein N(6)-(lipoyl)lysine from octanoyl-[acyl-carrier-protein]: step 1/2. Its function is as follows. Catalyzes the transfer of endogenously produced octanoic acid from octanoyl-acyl-carrier-protein onto the lipoyl domains of lipoate-dependent enzymes. Lipoyl-ACP can also act as a substrate although octanoyl-ACP is likely to be the physiological substrate. This is Octanoyltransferase from Nostoc sp. (strain PCC 7120 / SAG 25.82 / UTEX 2576).